Consider the following 463-residue polypeptide: MKTAVEELSPTRVKLTIEVPFEELDHAFDVTYKSLAKQVRIKGFRPGKAPAKLIDRYVGRGAVLTQAVNHAVPELYSEAVSKEEVPVLGPPEVEITRLEDGKELAFTAEVDVRPKFEVTDYEGIEVTVDDAEVTEEQVNERLEALRQRFATLIGVDRPAEQGDHVSIDLSASVDGKKLEDAQASGVSYEIGAGTLLQGLDEAIIGLSAGESATFTTTLVGGEHKGREADVTVTVHSVKLKELPELDDEFARLASEFDTIEELRASEAERLGELLRAQQLRQARDRVLEKLVDSIDIPLPESVIKQEADRRRELLDRQLSQSGLSKEAYLEAQEKTEEEFEAELTENATRAVKTGFVLDQLASQENLTASNEELTQYVVEQAQSMGISPDQLFQSLMQANQLQLVYVEVLRAKALDLVVSKAKITDESGNTIEPPTPVHTETITVASGDEETEESAAEQGETEK.

One can recognise a PPIase FKBP-type domain in the interval 162 to 243 (GDHVSIDLSA…VHSVKLKELP (82 aa)). The span at 427 to 444 (SGNTIEPPTPVHTETITV) shows a compositional bias: polar residues. Residues 427 to 463 (SGNTIEPPTPVHTETITVASGDEETEESAAEQGETEK) form a disordered region.

It belongs to the FKBP-type PPIase family. Tig subfamily.

The protein resides in the cytoplasm. The enzyme catalyses [protein]-peptidylproline (omega=180) = [protein]-peptidylproline (omega=0). In terms of biological role, involved in protein export. Acts as a chaperone by maintaining the newly synthesized protein in an open conformation. Functions as a peptidyl-prolyl cis-trans isomerase. This chain is Trigger factor, found in Thermobifida fusca (strain YX).